The sequence spans 450 residues: Vacuolar cation/proton exchanger 1c (450 aa).

Residues 1 to 73 (MAPPESSHHH…LLGGPAAQLQ (73 aa)) lie on the Cytoplasmic side of the membrane. Residues 28 to 52 (AAEEEEKKEAAAWTPSSSSSMTGRK) form a disordered region. A helical transmembrane segment spans residues 74-94 (EVLLGTKLYPLFSAVPLAVAA). Residues 95-101 (ESLRLGR) are Extracellular-facing. The chain crosses the membrane as a helical span at residues 102 to 122 (VWVFAFSLIGLAPLAERVSFL). The Cytoplasmic segment spans residues 123-134 (SEHIANTVGPTA). A helical membrane pass occupies residues 135-155 (GGIMNATCGNVPELIIALFAL). The segment at 143–178 (GNVPELIIALFALHKNKMEILKWSLLGSILSNLLLV) is cation selection. Residues 156 to 170 (HKNKMEILKWSLLGS) are Extracellular-facing. A helical membrane pass occupies residues 171-191 (ILSNLLLVLGSSLLFGGIVNI). The Cytoplasmic segment spans residues 192-201 (GKERPLDKRQ). Residues 202–222 (ADVSIGLLLLGVLCHIATLVS) traverse the membrane as a helical segment. Over 223–239 (KYTSSTGDSINSSSVMQ) the chain is Extracellular. Residues 240–260 (LSRSCAIVMLIAYFGSLMFQL) traverse the membrane as a helical segment. The Cytoplasmic segment spans residues 261 to 287 (KTHRQIFELEEDSSDSSSSEDDATDKS). Residues 288-308 (VIGFASAMVWLIGMAVVTAML) form a helical membrane-spanning segment. Over 309 to 331 (SSYVVTTIEEASESMGIPVRFIS) the chain is Extracellular. The chain crosses the membrane as a helical span at residues 332 to 352 (IILLPIVGNAAEHAGAIIFAF). Residues 339–374 (GNAAEHAGAIIFAFKNKIDISLGITLGSATQISMLV) are cation selection. Over 353-360 (KNKIDISL) the chain is Cytoplasmic. A helical membrane pass occupies residues 361-381 (GITLGSATQISMLVVPVILIV). Over 382-385 (SWVN) the chain is Extracellular. A helical transmembrane segment spans residues 386-406 (AIPMDLDFNLLETGSLAMAVI). At 407–424 (TTAFTLQDDKWHYLKGLN) the chain is on the cytoplasmic side. Residues 425–445 (LVFSYIVIAVCFFVMKALPTL) form a helical membrane-spanning segment. Residues 446–450 (KKEDD) are Extracellular-facing.

This sequence belongs to the Ca(2+):cation antiporter (CaCA) (TC 2.A.19) family. Cation/proton exchanger (CAX) subfamily. Expressed in leaf blades.

Its subcellular location is the vacuole membrane. Functionally, vacuolar cation/proton exchanger (CAX). Translocates Ca(2+) and other metal ions into vacuoles using the proton gradient formed by H(+)-ATPase and H(+)-pyrophosphatase. This chain is Vacuolar cation/proton exchanger 1c (CAX1c), found in Oryza sativa subsp. japonica (Rice).